Consider the following 821-residue polypeptide: Integrator complex assembly factor BRAT1 (821 aa).

Residues 100–200 are required for interaction with NDFIP1; the sequence is PGLFGEPGPL…WPACAQKIMD (101 aa). HEAT repeat units follow at residues 495-531 and 544-576; these read PQFL…SRHW and SEVP…SSQG. The tract at residues 741-767 is disordered; the sequence is GSPNTASAEATLPRWRAGEQAQPPGDQ. A Phosphoserine modification is found at Ser-742. The short motif at 819–821 is the BRAT1-like motif element; sequence DCY. Cys-820 is a binding site for Zn(2+).

It belongs to the BRAT1 family. In terms of assembly, part of the multiprotein complex composed of BRAT1, WDR73, as well as integrator complex subunits INTS9 and INTS11. Interacts with BRCA1 and ATM. Interacts with MTOR and RPTOR. Interacts with NDFIP1. Interacts with SMC1A and PRKDC. In terms of processing, ubiquitinated by NEDD4, NEDD4L and ITCH; mono- and polyubiquitinated forms are detected. Ubiquitously expressed.

The protein localises to the nucleus. It localises to the cytoplasm. Functionally, component of a multiprotein complex required for the assembly of the RNA endonuclease module of the integrator complex. Associates with INTS9 and INTS11 in the cytoplasm and blocks the active site of INTS11 to inhibit the endonuclease activity of INTS11 before formation of the full integrator complex. Following dissociation of WDR73 of the complex, BRAT1 facilitates the nuclear import of the INTS9-INTS11 heterodimer. In the nucleus, INTS4 is integrated to the INTS9-INTS11 heterodimer and BRAT1 is released from the mature RNA endonuclease module by inositol hexakisphosphate (InsP6). BRAT1 is also involved in DNA damage response; activates kinases ATM, SMC1A and PRKDC by modulating their phosphorylation status following ionizing radiation (IR) stress. Plays a role in regulating mitochondrial function and cell proliferation. Required for protein stability of MTOR and MTOR-related proteins, and cell cycle progress by growth factors. This chain is Integrator complex assembly factor BRAT1, found in Homo sapiens (Human).